The chain runs to 166 residues: Putative peptidyl-prolyl cis-trans isomerase dodo (166 aa).

One can recognise a WW domain in the interval 5–39; sequence EQLPDGWEKRTSRSTGMSYYLNMYTKESQWDQPTE. The interval 32 to 53 is disordered; the sequence is SQWDQPTEPAKKAGGGSAGGGD. Over residues 44 to 53 the composition is skewed to gly residues; sequence AGGGSAGGGD. The PpiC domain occupies 55 to 166; sequence PDEVHCLHLL…SGLHIILRKA (112 aa).

It carries out the reaction [protein]-peptidylproline (omega=180) = [protein]-peptidylproline (omega=0). This chain is Putative peptidyl-prolyl cis-trans isomerase dodo (dod), found in Drosophila melanogaster (Fruit fly).